The primary structure comprises 313 residues: Formimidoylglutamase (313 aa).

Mn(2+)-binding residues include His130, Asp155, His157, Asp159, Asp241, and Asp243.

The protein belongs to the arginase family. Mn(2+) serves as cofactor.

It catalyses the reaction N-formimidoyl-L-glutamate + H2O = formamide + L-glutamate. It functions in the pathway amino-acid degradation; L-histidine degradation into L-glutamate; L-glutamate from N-formimidoyl-L-glutamate (hydrolase route): step 1/1. Its function is as follows. Catalyzes the conversion of N-formimidoyl-L-glutamate to L-glutamate and formamide. The protein is Formimidoylglutamase of Citrobacter koseri (strain ATCC BAA-895 / CDC 4225-83 / SGSC4696).